A 184-amino-acid polypeptide reads, in one-letter code: Dual-action ribosomal maturation protein DarP (184 aa).

The tract at residues methionine 1–aspartate 21 is disordered.

Belongs to the DarP family.

Its subcellular location is the cytoplasm. In terms of biological role, member of a network of 50S ribosomal subunit biogenesis factors which assembles along the 30S-50S interface, preventing incorrect 23S rRNA structures from forming. Promotes peptidyl transferase center (PTC) maturation. This chain is Dual-action ribosomal maturation protein DarP, found in Edwardsiella ictaluri (strain 93-146).